The chain runs to 314 residues: Jacalin-related lectin 9 (314 aa).

The N-terminal stretch at 1-23 (MIFIYIFLFLSSAIIDSNGFAMA) is a signal peptide. 2 consecutive Jacalin-type lectin domains span residues 24 to 165 (QKLE…YLTK) and 168 to 313 (PTKS…YFSP).

This sequence belongs to the jacalin lectin family.

The protein is Jacalin-related lectin 9 (JAL9) of Arabidopsis thaliana (Mouse-ear cress).